The primary structure comprises 372 residues: MKYDLIIIGSGSVGAAAGYYATRAGLNVLMTDAHMPPHQHGSHHGDTRLIRHAYGEGEKYVPLVLRAQTLWDELSRHNEDDPIFVRSGVINLGPADSAFLANVAHSAEQWQLNVEKLDAQGIMARWPEIRVPDNYIGLFETDSGFLRSELAIKTWIQLAKEAGCAQLFNCPVTAIRHDDDGVTIETADGEYQAKKAIVCAGTWVKDLLPELPVQPVRKVFAWYQADGRYSVKNKFPAFTGELPNGDQYYGFPAENDALKIGKHNGGQVIHSADERVPFAEVVSDGSEAFPFLRNVLPGIGCCLYGAACTYDNSPDEDFIIDTLPGHDNTLLITGLSGHGFKFASVLGEIAADFAQDKKSDFDLTPFRLSRFQ.

4–34 (DLIIIGSGSVGAAAGYYATRAGLNVLMTDAH) contacts FAD. S-8alpha-FAD cysteine is present on Cys-308.

It belongs to the MSOX/MTOX family. MTOX subfamily. In terms of assembly, monomer. Requires FAD as cofactor.

The enzyme catalyses N(alpha)-methyl-L-tryptophan + O2 + H2O = L-tryptophan + formaldehyde + H2O2. Functionally, catalyzes the oxidative demethylation of N-methyl-L-tryptophan. The sequence is that of N-methyl-L-tryptophan oxidase from Escherichia coli O9:H4 (strain HS).